The sequence spans 554 residues: Urocanate hydratase (554 aa).

NAD(+) is bound by residues 51–52, Gln-129, 175–177, Glu-195, 241–242, 262–266, 272–273, and Tyr-321; these read GG, GMG, NA, QTSAH, and YL. Cys-409 is an active-site residue. Gly-491 is an NAD(+) binding site.

This sequence belongs to the urocanase family. NAD(+) is required as a cofactor.

It localises to the cytoplasm. The enzyme catalyses 4-imidazolone-5-propanoate = trans-urocanate + H2O. It functions in the pathway amino-acid degradation; L-histidine degradation into L-glutamate; N-formimidoyl-L-glutamate from L-histidine: step 2/3. In terms of biological role, catalyzes the conversion of urocanate to 4-imidazolone-5-propionate. This is Urocanate hydratase from Caulobacter vibrioides (strain ATCC 19089 / CIP 103742 / CB 15) (Caulobacter crescentus).